Consider the following 46-residue polypeptide: U1-plectoxin-Pt1f (46 aa).

5 disulfide bridges follow: cysteine 4-cysteine 18, cysteine 11-cysteine 24, cysteine 17-cysteine 35, cysteine 21-cysteine 44, and cysteine 26-cysteine 33.

Belongs to the neurotoxin 02 (plectoxin) family. 02 (plectoxin) subfamily. Expressed by the venom gland.

It localises to the secreted. Potent toxin that may paralyze and/or kill insect pests such as H.virescens (lepidoptera), S.exigua (beet armyworm) and M.sexta (tobacco hornworm). This is U1-plectoxin-Pt1f from Plectreurys tristis (Spider).